The following is a 975-amino-acid chain: MFKRIVLAVINLVFLIVSTTAFASLHYPESFNQQLIRYKGRDSSNGYFELASEAYYTGTYDLVEELNETATCLRADCREQSNSSPVVRDRRRVDPTFYGHPKTREQIWERNFAHVIEDNRQTLSLVTLLNKIILKYLHSCIPIVLFDTYVATTENYMLEALFSDFPITYITGRIGPNYTLDNPGILEPTGPQCRSYIIFLADVMMTRKVIGPQMNSYVVLIPRSSQWKLQEFLAAKQSRDIINLLVIGESYSVDKRINNEQPYVLYTHELYIDGLGANRPQVLTSWIGNKFSRNNVNLFPRKLRKGFSGHRFTVKAAHQPPFMIKRLSTDGVGNVNIRWEGLEMRLLRVMAQYLNFTYDIIEPGRTELGPGDAVVEEIKRGQGDMGLAGIYVTIERNLATEMSVSHSTDCAAFLTLMSSALPRYRAILGPFQWPVWVAVILIYLLAIFPLAFSDKMTLRHLLGNWSEIENMFWYVFGTFTNSLTFQGENSWSNTRKTSTRMLIGIYWVFTIIITACYTGSIIAFITLPVEPERIDGIEQLSRGFFRVGTLDRGGWERWFLNSSHKQTNKLLKDLRFVSSVDEGIRNVTEAFLISYAFIGSKGELEFLIKSNLSHQFENKRYGLHVSRECFALYGVSMVFPPNSVHRDPINNAILYMQEAGLIGKLNRDVTWETMKTKDGRRKEASVGEVLRSTAPSERGLTLADTEGMFLLMLFGYVVALGVLISEWVGGCTNKCREVLKERAERLKAAAAEIAAAATAGSDNGSLPVSSPTSTNRNSPHKRTGPNGVENSLPASGNGSATVRRIRLTGEDSENEPNEYDVPPDAASDGGSSLQRHSLSECLSEVSAHTMQDLYNGPDRRHSTIVFLDGQLMSEEEAQRKVARSKSRHRHSLSSVLEREVSQLFRFLGKESPHSARADESSDAGGLVRRGAGRERKEMKVAVEINARATEEGQQGPGAAVGRRSIEATFGEKLLH.

Positions 1–21 are cleaved as a signal peptide; that stretch reads MFKRIVLAVINLVFLIVSTTA. N-linked (GlcNAc...) asparagine glycans are attached at residues asparagine 67, asparagine 177, and asparagine 355. The helical transmembrane segment at 433 to 453 threads the bilayer; that stretch reads WPVWVAVILIYLLAIFPLAFS. Asparagine 464 is a glycosylation site (N-linked (GlcNAc...) asparagine). A helical transmembrane segment spans residues 505–525; the sequence is IYWVFTIIITACYTGSIIAFI. 3 N-linked (GlcNAc...) asparagine glycosylation sites follow: asparagine 561, asparagine 586, and asparagine 611. A helical membrane pass occupies residues 708 to 728; the sequence is MFLLMLFGYVVALGVLISEWV. Disordered regions lie at residues 757 to 839 and 911 to 938; these read ATAG…HSLS and SPHSARADESSDAGGLVRRGAGRERKEM. Polar residues-rich tracts occupy residues 760–777 and 788–800; these read GSDNGSLPVSSPTSTNRN and VENSLPASGNGSA. N-linked (GlcNAc...) asparagine glycans are attached at residues asparagine 763 and asparagine 797.

The protein belongs to the glutamate-gated ion channel (TC 1.A.10.1) family. As to expression, in both female and male antenna, expressed specifically in 3 sensory neurons of flagellomere 13 segment (at protein level).

It is found in the cell projection. The protein resides in the cilium membrane. Its function is as follows. Integral part of a neural sensory system in the antenna that provides the neural basis for the response to environmental changes in temperature (thermosensation). Specifically, required for thermosensing by the cooling cell. Plays a role in heat seeking and heat-stimulated blood feeding behavior. This chain is Ionotropic receptor 21a, found in Anopheles gambiae (African malaria mosquito).